Here is a 1005-residue protein sequence, read N- to C-terminus: Sorbin and SH3 domain-containing protein 1 homolog (1005 aa).

Disordered stretches follow at residues 1–31, 61–86, 99–153, 243–292, 386–409, 427–475, and 542–622; these read MMHHPHPFGSNLANSSEPQQPSGQYLNPAAD, LDMKTPTGNSSRYQKPAPPPVDSTPS, YVDP…PHSA, NELK…FNSE, FEEKQNRSPMTSTPSYKEQGFKND, TTKN…TAAA, and MHRK…SNEE. Residues 11–25 show a composition bias toward polar residues; it reads NLANSSEPQQPSGQY. Residues 260–269 show a composition bias toward polar residues; sequence VMTSSTENLK. A compositionally biased stretch (low complexity) spans 270 to 279; it reads NGNNQQNQQP. The span at 392 to 409 shows a compositional bias: polar residues; it reads RSPMTSTPSYKEQGFKND. The segment covering 448 to 475 has biased composition (low complexity); that stretch reads SDTYPVSSSTTSTWPSHTTTPTTTTAAA. The SoHo domain occupies 499–567; that stretch reads VMSTNMDEPI…FINPSNVTDG (69 aa). A compositionally biased stretch (basic and acidic residues) spans 544 to 557; sequence RKGEDGSNEGKEQH. A compositionally biased stretch (polar residues) spans 559–589; that stretch reads INPSNVTDGIGRTTPTASNLGRSRENLSFNQ. A coiled-coil region spans residues 610–642; that stretch reads YNNQERVKQSNEEELLRLKAEKLAEELRKEKER. SH3 domains follow at residues 683–742, 745–805, and 946–1005; these read QPVM…INTG, GDSQ…PIEQ, and KGSE…VKRH.

As to quaternary structure, may interact with deb-1. In terms of tissue distribution, expressed in body wall muscles, muscle arm attachment sites at the nerve ring, all non-striated muscles, and distal tip cells of the gonad. Highly expressed in the origins and insertions of the vulval and anal depressor muscles and the spicule-associated and diagonal muscles of the male tail. Expressed in small puncta throughout the uterus, stomatointestinal muscle and proximal gonadal sheath tissues. Not expressed in the pharynx.

The protein resides in the cell junction. It is found in the adherens junction. Its subcellular location is the cell membrane. It localises to the focal adhesion. Required for organization of sarcomeres in body wall muscles and for maintaining normal mitochondrial position in myocytes. This Caenorhabditis elegans protein is Sorbin and SH3 domain-containing protein 1 homolog.